The chain runs to 208 residues: Uracil phosphoribosyltransferase (208 aa).

5-phospho-alpha-D-ribose 1-diphosphate contacts are provided by residues arginine 78, arginine 103, and 130–138 (DPMLAIGGS). Residues isoleucine 193 and 198 to 200 (GDA) contribute to the uracil site. Aspartate 199 contributes to the 5-phospho-alpha-D-ribose 1-diphosphate binding site.

This sequence belongs to the UPRTase family. Mg(2+) serves as cofactor.

It carries out the reaction UMP + diphosphate = 5-phospho-alpha-D-ribose 1-diphosphate + uracil. Its pathway is pyrimidine metabolism; UMP biosynthesis via salvage pathway; UMP from uracil: step 1/1. Allosterically activated by GTP. Catalyzes the conversion of uracil and 5-phospho-alpha-D-ribose 1-diphosphate (PRPP) to UMP and diphosphate. This is Uracil phosphoribosyltransferase from Vibrio cholerae serotype O1 (strain ATCC 39315 / El Tor Inaba N16961).